The sequence spans 393 residues: NAD(P)H-quinone oxidoreductase subunit H, chloroplastic (393 aa).

Belongs to the complex I 49 kDa subunit family. In terms of assembly, NDH is composed of at least 16 different subunits, 5 of which are encoded in the nucleus.

The protein resides in the plastid. The protein localises to the chloroplast thylakoid membrane. It carries out the reaction a plastoquinone + NADH + (n+1) H(+)(in) = a plastoquinol + NAD(+) + n H(+)(out). It catalyses the reaction a plastoquinone + NADPH + (n+1) H(+)(in) = a plastoquinol + NADP(+) + n H(+)(out). In terms of biological role, NDH shuttles electrons from NAD(P)H:plastoquinone, via FMN and iron-sulfur (Fe-S) centers, to quinones in the photosynthetic chain and possibly in a chloroplast respiratory chain. The immediate electron acceptor for the enzyme in this species is believed to be plastoquinone. Couples the redox reaction to proton translocation, and thus conserves the redox energy in a proton gradient. This is NAD(P)H-quinone oxidoreductase subunit H, chloroplastic from Nasturtium officinale (Watercress).